Reading from the N-terminus, the 259-residue chain is Small ribosomal subunit protein eS1 (259 aa).

Residue Ala2 is modified to N-acetylalanine; partial.

It belongs to the eukaryotic ribosomal protein eS1 family. In terms of assembly, component of the small ribosomal subunit. Mature ribosomes consist of a small (40S) and a large (60S) subunit. The 40S subunit contains about 33 different proteins and 1 molecule of RNA (18S). The 60S subunit contains about 49 different proteins and 3 molecules of RNA (25S, 5.8S and 5S).

The protein resides in the cytoplasm. This Cryptococcus neoformans var. neoformans serotype D (strain B-3501A) (Filobasidiella neoformans) protein is Small ribosomal subunit protein eS1.